A 234-amino-acid polypeptide reads, in one-letter code: MQFSPPLQRATLIQRYKRFLADVITPDGTELTLHCPNTGAMTGCATPGDTVWYSTSENTKRKYPHTWELTQTRTGALICVNTLWANRLTKEAIQNEQLSELSGYSLLKSEVKYGAERSRIDFMLQADSRPDCYIEVKSVTLAEQEYGYFPDAVTLRGQKHLRELMSVAAEGHRAVVLFAVLHSAITRFSPARHIDAKYAQLLIEAQLKGVEILVYKAELSAEGMTLKEPLPMTL.

It belongs to the SfsA family.

This is Sugar fermentation stimulation protein homolog from Citrobacter koseri (strain ATCC BAA-895 / CDC 4225-83 / SGSC4696).